Here is a 335-residue protein sequence, read N- to C-terminus: MWIHFAPLKIPFSRRLQTGAVLQWAVSFLAMAQCCIALYILLLFSRYWYLAVLYGVWLYIDWDTPSKGGRRSNWVRSWTVWKYFAEYFPIKLLCTAPLDPKYNYIMGFHPHGVLVVGAFGNFCTEGTGFSRLFPGLTPHLLMLPAWFRVPFFREYIMSGSLVSSDRSSAHHLLSQKSGGQALVIAVGGPPEALDAKPGELTLQLLNRTGFIKMALTHGAHLVPVLSFGENDLYNQVNNPRGSLLRATQEKLQKIFGIALPLFHGRGVFQYSWGLLPHRRPIYTVVGSPIHVTKTPCPTREQISSLHSLYIAKLRDLFETHKGNYGIPEDRSLVLC.

2 helical membrane-spanning segments follow: residues 24 to 44 and 104 to 124; these read WAVS…LLLF and YIMG…NFCT. A glycan (N-linked (GlcNAc...) asparagine) is linked at Asn206.

It belongs to the diacylglycerol acyltransferase family.

It localises to the endoplasmic reticulum membrane. Its subcellular location is the cytoplasm. The protein localises to the perinuclear region. The catalysed reaction is a 2-acylglycerol + an acyl-CoA = a 1,2-diacylglycerol + CoA. It carries out the reaction a 2-acylglycerol + an acyl-CoA = a 1,2-diacyl-sn-glycerol + CoA. It catalyses the reaction a 2-acylglycerol + an acyl-CoA = a 2,3-diacyl-sn-glycerol + CoA. The enzyme catalyses a 1-acylglycerol + an acyl-CoA = a 1,2-diacylglycerol + CoA. The catalysed reaction is a 1-acylglycerol + an acyl-CoA = a 1,3-diacylglycerol + CoA. It carries out the reaction 1-O-alkylglycerol + an acyl-CoA = 1-O-alkyl-3-acylglycerol + CoA. It catalyses the reaction an acyl-CoA + a 1,2-diacyl-sn-glycerol = a triacyl-sn-glycerol + CoA. The protein operates within glycerolipid metabolism; triacylglycerol biosynthesis. Its function is as follows. Involved in glycerolipid synthesis and lipid metabolism. Catalyzes the formation of diacylglycerol, the precursor of triacylglycerol, by transferring the acyl chain of a fatty acyl-CoA to a monoacylglycerol. Plays a central role in absorption of dietary fat in the small intestine by catalyzing the resynthesis of triacylglycerol in enterocytes. Has a preference toward monoacylglycerols containing unsaturated fatty acids in an order of C18:3 &gt; C18:2 &gt; C18:1 &gt; C18:0 at sn-2. Able to use 1-monoalkylglycerol (1-MAkG, 1-O-alkylglycerol) as an acyl acceptor for the synthesis of monoalkyl-monoacylglycerol (MAMAG, 1-O-alkyl-3-acylglycerol or 1-O-alkyl-2-acylglycerol) and subsequently, with lower efficiency, may add another acyl chain producing monoalkyl-diacylglycerol (MADAG, 1-O-alkyl-2,3-diacylglycerol). Possesses weak but significant activity with diacylglycerol as substrate, producing triacylglycerol (triacyl-sn-glycerol). In Xenopus tropicalis (Western clawed frog), this protein is 2-acylglycerol O-acyltransferase 2 (mogat2).